Reading from the N-terminus, the 223-residue chain is Methanol utilization control regulatory protein MoxX (223 aa).

The 118-residue stretch at 16–133 (QILIVDDHPV…EICAAFTEVA (118 aa)) folds into the Response regulatory domain. Positions 155–220 (PGTSAPRLTG…DLVVKGIRYF (66 aa)) constitute an HTH luxR-type domain. Residues 179–198 (YRDIADRACISYKTVSNVSL) constitute a DNA-binding region (H-T-H motif).

In terms of processing, phosphorylated by MoxY.

The protein localises to the cytoplasm. Its function is as follows. Member of the two-component regulatory system MoxY/MoxX probably involved in the regulation of the methanol dehydrogenase expression. The protein is Methanol utilization control regulatory protein MoxX (moxX) of Paracoccus denitrificans.